The following is a 207-amino-acid chain: Tetrathionate reductase subunit B (207 aa).

The first 28 residues, 1–28 (MLISKTLIFYQVVNIVSQKGSGKRRWKM), serve as a signal peptide directing secretion. 4Fe-4S ferredoxin-type domains are found at residues 34–63 (YVYV…PVGY), 75–106 (GRVA…KTEE), and 107–136 (GLVL…RNPV). The [4Fe-4S] cluster site is built by Cys-43, Cys-46, Cys-49, Cys-53, Cys-84, Cys-87, Cys-92, Cys-96, Cys-116, Cys-119, Cys-122, Cys-126, Cys-143, Cys-146, Cys-157, and Cys-161.

As to quaternary structure, probably composed of three subunits: TtrA, TtrB and TtrC.

It localises to the cell membrane. In terms of biological role, part of a membrane-bound tetrathionate reductase that catalyzes the reduction of tetrathionate to thiosulfate. TtrB is probably involved in transfer of electrons from TtrC to TtrA. In Archaeoglobus fulgidus (strain ATCC 49558 / DSM 4304 / JCM 9628 / NBRC 100126 / VC-16), this protein is Tetrathionate reductase subunit B (ttrB).